The chain runs to 326 residues: MNIWQSTSIITWLLAPFSLLFWLVSQIRLFLFRKKILKSYRSPVPVLVVGNISVGGNGKTPVVVWLVEQLQQRGVKVGVISRGYGGKSKDFPQLVTNQSSAEMVGDEPVLIVQRTGVPLAISANRQQSIELLLNQFKLDLIVTDDGLQHYALQRDIEWVVVDGIRRFGNGFVLPAGGLRELPSRLQTVQAIICNGGIAHQNEHLMTLEPEFAVNLRTGEQKPITDFIGQECVAIAGIGHPPRFFNMLENLGVKLLKTQGFADHQAFEPAQLKALAAEQIPLLMTEKDAVKCRTFAQQNWWYVPVSAKFSPESTACLLEPILKRLGK.

53–60 (SVGGNGKT) is an ATP binding site.

It belongs to the LpxK family.

It carries out the reaction a lipid A disaccharide + ATP = a lipid IVA + ADP + H(+). It functions in the pathway glycolipid biosynthesis; lipid IV(A) biosynthesis; lipid IV(A) from (3R)-3-hydroxytetradecanoyl-[acyl-carrier-protein] and UDP-N-acetyl-alpha-D-glucosamine: step 6/6. Functionally, transfers the gamma-phosphate of ATP to the 4'-position of a tetraacyldisaccharide 1-phosphate intermediate (termed DS-1-P) to form tetraacyldisaccharide 1,4'-bis-phosphate (lipid IVA). This Actinobacillus pleuropneumoniae serotype 7 (strain AP76) protein is Tetraacyldisaccharide 4'-kinase.